Here is a 286-residue protein sequence, read N- to C-terminus: Putative L-ribulose-5-phosphate 3-epimerase SgbU (286 aa).

The protein belongs to the L-ribulose-5-phosphate 3-epimerase family.

The catalysed reaction is L-ribulose 5-phosphate = L-xylulose 5-phosphate. In terms of biological role, catalyzes the isomerization of L-xylulose-5-phosphate to L-ribulose-5-phosphate. In Haemophilus influenzae (strain ATCC 51907 / DSM 11121 / KW20 / Rd), this protein is Putative L-ribulose-5-phosphate 3-epimerase SgbU (sgbU).